The sequence spans 190 residues: Adenine phosphoribosyltransferase (190 aa).

The protein belongs to the purine/pyrimidine phosphoribosyltransferase family. As to quaternary structure, homodimer.

It localises to the cytoplasm. The catalysed reaction is AMP + diphosphate = 5-phospho-alpha-D-ribose 1-diphosphate + adenine. It participates in purine metabolism; AMP biosynthesis via salvage pathway; AMP from adenine: step 1/1. Catalyzes a salvage reaction resulting in the formation of AMP, that is energically less costly than de novo synthesis. This chain is Adenine phosphoribosyltransferase, found in Cupriavidus taiwanensis (strain DSM 17343 / BCRC 17206 / CCUG 44338 / CIP 107171 / LMG 19424 / R1) (Ralstonia taiwanensis (strain LMG 19424)).